Reading from the N-terminus, the 161-residue chain is Large ribosomal subunit protein uL11 (161 aa).

This sequence belongs to the universal ribosomal protein uL11 family. As to quaternary structure, part of the ribosomal stalk of the 50S ribosomal subunit. Interacts with L10 and the large rRNA to form the base of the stalk. L10 forms an elongated spine to which L12 dimers bind in a sequential fashion forming a multimeric L10(L12)X complex.

Forms part of the ribosomal stalk which helps the ribosome interact with GTP-bound translation factors. This chain is Large ribosomal subunit protein uL11, found in Methanosarcina barkeri (strain Fusaro / DSM 804).